The sequence spans 132 residues: MARDPSTLRYAETHEWVDVQEEGGDKFATIGISAFAVEQLNDLVYMDLPEVGRTLEVGEEFGEVESVKAVSPLYSPVAGEVVAVHTDLPDNLDNLNDDAFDFGWILKVKLSADLPETLMDFAAYQKQCSEAG.

The region spanning 27 to 109 (FATIGISAFA…FDFGWILKVK (83 aa)) is the Lipoyl-binding domain. Lys-68 is modified (N6-lipoyllysine).

This sequence belongs to the GcvH family. As to quaternary structure, the glycine cleavage system is composed of four proteins: P, T, L and H. It depends on (R)-lipoate as a cofactor.

Functionally, the glycine cleavage system catalyzes the degradation of glycine. The H protein shuttles the methylamine group of glycine from the P protein to the T protein. The polypeptide is Glycine cleavage system H protein (Rhodopirellula baltica (strain DSM 10527 / NCIMB 13988 / SH1)).